Consider the following 900-residue polypeptide: Alanine--tRNA ligase (900 aa).

His-567, His-571, Cys-671, and His-675 together coordinate Zn(2+).

This sequence belongs to the class-II aminoacyl-tRNA synthetase family. The cofactor is Zn(2+).

It localises to the cytoplasm. The enzyme catalyses tRNA(Ala) + L-alanine + ATP = L-alanyl-tRNA(Ala) + AMP + diphosphate. Functionally, catalyzes the attachment of alanine to tRNA(Ala) in a two-step reaction: alanine is first activated by ATP to form Ala-AMP and then transferred to the acceptor end of tRNA(Ala). Also edits incorrectly charged Ser-tRNA(Ala) and Gly-tRNA(Ala) via its editing domain. The sequence is that of Alanine--tRNA ligase from Mycoplasma pneumoniae (strain ATCC 29342 / M129 / Subtype 1) (Mycoplasmoides pneumoniae).